The following is a 179-amino-acid chain: MNKPIDLKSAIRTISNYPKPGIEFRDITTLLGDARAFRRAVDELVQPWAGTKVDKIAGMEARGFILGGAVAHQLSAGFVPIRKKGKLPHTTVSIAYSLEYGLDEMEIHADAVVKGEKVILVDDLIATGGTATGAVGLLQKLGAEVIAACFVIDLPDLGGAKKIEALGVPVRSLISFEGH.

It belongs to the purine/pyrimidine phosphoribosyltransferase family. As to quaternary structure, homodimer.

It localises to the cytoplasm. It carries out the reaction AMP + diphosphate = 5-phospho-alpha-D-ribose 1-diphosphate + adenine. It participates in purine metabolism; AMP biosynthesis via salvage pathway; AMP from adenine: step 1/1. Its function is as follows. Catalyzes a salvage reaction resulting in the formation of AMP, that is energically less costly than de novo synthesis. The protein is Adenine phosphoribosyltransferase of Beijerinckia indica subsp. indica (strain ATCC 9039 / DSM 1715 / NCIMB 8712).